Consider the following 267-residue polypeptide: tRNA pseudouridine synthase A (267 aa).

Asp-51 (nucleophile) is an active-site residue. Residue Tyr-109 participates in substrate binding.

It belongs to the tRNA pseudouridine synthase TruA family. Homodimer.

The enzyme catalyses uridine(38/39/40) in tRNA = pseudouridine(38/39/40) in tRNA. Functionally, formation of pseudouridine at positions 38, 39 and 40 in the anticodon stem and loop of transfer RNAs. The sequence is that of tRNA pseudouridine synthase A from Staphylococcus epidermidis (strain ATCC 12228 / FDA PCI 1200).